Reading from the N-terminus, the 777-residue chain is Myotubularin-related protein 10 (777 aa).

Positions P196 to K217 are disordered. Over residues S197–S214 the composition is skewed to gly residues. The region spanning F221 to Y661 is the Myotubularin phosphatase domain. S607 and S751 each carry phosphoserine.

The protein belongs to the protein-tyrosine phosphatase family. Non-receptor class myotubularin subfamily.

This Homo sapiens (Human) protein is Myotubularin-related protein 10 (MTMR10).